Here is a 281-residue protein sequence, read N- to C-terminus: Ribulose-5-phosphate-3-epimerase, chloroplastic (281 aa).

Residues 1 to 45 constitute a chloroplast transit peptide; sequence MSTSAASLCCSSTQVNGFGLRPERSLLYQPTSFSFSRRRTHGIVK. Serine 63 is a binding site for substrate. A divalent metal cation is bound by residues histidine 88, aspartate 90, and histidine 121. Aspartate 90 acts as the Proton acceptor in catalysis. Substrate-binding positions include histidine 121, 199–202, 232–234, and 254–256; these read GFGG, DGG, and GSA. Aspartate 232 is a binding site for a divalent metal cation. Residue aspartate 232 is the Proton donor of the active site.

It belongs to the ribulose-phosphate 3-epimerase family. Homooctamer. Co(2+) is required as a cofactor. Requires Fe(2+) as cofactor. Mn(2+) serves as cofactor. It depends on Zn(2+) as a cofactor. In terms of tissue distribution, present in roots, seeds and flowers. Accumulates in nematode feeding sites (NFS).

It is found in the plastid. The protein localises to the chloroplast thylakoid membrane. It catalyses the reaction D-ribulose 5-phosphate = D-xylulose 5-phosphate. It functions in the pathway carbohydrate biosynthesis; Calvin cycle. Its function is as follows. Essential protein required during embryogenesis. Catalyzes the reversible epimerization of D-ribulose 5-phosphate to D-xylulose 5-phosphate. Essential for the early steps of nematode feeding sites (NFS, multinucleated root cells) formation induced by the root-knot nematodes Heterodera schachtii, Meloidogyne incognita, M.javanica and M.hapla. This is Ribulose-5-phosphate-3-epimerase, chloroplastic from Arabidopsis thaliana (Mouse-ear cress).